Reading from the N-terminus, the 648-residue chain is Threonine--tRNA ligase (648 aa).

Residues M1 to T63 form the TGS domain. The catalytic stretch occupies residues D243–P541. Residues C337, H388, and H518 each coordinate Zn(2+).

The protein belongs to the class-II aminoacyl-tRNA synthetase family. Homodimer. Requires Zn(2+) as cofactor.

Its subcellular location is the cytoplasm. The catalysed reaction is tRNA(Thr) + L-threonine + ATP = L-threonyl-tRNA(Thr) + AMP + diphosphate + H(+). Catalyzes the attachment of threonine to tRNA(Thr) in a two-step reaction: L-threonine is first activated by ATP to form Thr-AMP and then transferred to the acceptor end of tRNA(Thr). Also edits incorrectly charged L-seryl-tRNA(Thr). The sequence is that of Threonine--tRNA ligase from Pediococcus pentosaceus (strain ATCC 25745 / CCUG 21536 / LMG 10740 / 183-1w).